Consider the following 332-residue polypeptide: L-lactate dehydrogenase A chain (332 aa).

Ala-2 carries the post-translational modification N-acetylalanine. The residue at position 5 (Lys-5) is an N6-acetyllysine; alternate. Lys-5 is subject to N6-succinyllysine; alternate. Lys-14 carries the N6-acetyllysine modification. 29 to 57 is a binding site for NAD(+); it reads GAVGMACAISILMKDLADELALVDVIEDK. The residue at position 57 (Lys-57) is an N6-acetyllysine; alternate. Residue Lys-57 forms a Glycyl lysine isopeptide (Lys-Gly) (interchain with G-Cter in SUMO2); alternate linkage. N6-acetyllysine is present on Lys-81. Arg-99 contributes to the NAD(+) binding site. Residue Arg-106 participates in substrate binding. Lys-118 bears the N6-acetyllysine; alternate mark. Lys-118 is subject to N6-succinyllysine; alternate. An N6-acetyllysine modification is found at Lys-126. Asn-138 provides a ligand contact to NAD(+). Residues Asn-138 and Arg-169 each contribute to the substrate site. His-193 functions as the Proton acceptor in the catalytic mechanism. Ser-213 is modified (phosphoserine). N6-acetyllysine is present on residues Lys-224 and Lys-232. Tyr-239 carries the post-translational modification Phosphotyrosine. An N6-acetyllysine modification is found at Lys-243. Position 248 (Thr-248) interacts with substrate. Thr-309 carries the phosphothreonine modification. Lys-318 carries the post-translational modification N6-acetyllysine; alternate. The residue at position 318 (Lys-318) is an N6-succinyllysine; alternate. Thr-322 is modified (phosphothreonine).

This sequence belongs to the LDH/MDH superfamily. LDH family. Homotetramer. Interacts with PTEN upstream reading frame protein MP31. ISGylated.

It is found in the cytoplasm. It catalyses the reaction (S)-lactate + NAD(+) = pyruvate + NADH + H(+). It functions in the pathway fermentation; pyruvate fermentation to lactate; (S)-lactate from pyruvate: step 1/1. Its function is as follows. Interconverts simultaneously and stereospecifically pyruvate and lactate with concomitant interconversion of NADH and NAD(+). This chain is L-lactate dehydrogenase A chain (Ldha), found in Rattus norvegicus (Rat).